We begin with the raw amino-acid sequence, 452 residues long: NADH-cytochrome b5 reductase-like protein alnC (452 aa).

In terms of domain architecture, Cytochrome b5 heme-binding spans 4–80 (PASITLAEVA…LKTLLVGSLQ (77 aa)). 33 to 38 (AEYRED) is a binding site for FMN. His39 and His63 together coordinate heme. FMN-binding positions include 80–83 (QSKT) and 116–125 (NDTSKYGQLP). A run of 2 helical transmembrane segments spans residues 120 to 140 (KYGQ…FFTL) and 166 to 186 (VGFL…ATFV). The region spanning 225–324 (NTQQFLTLVD…RGPFGRYSPS (100 aa)) is the FAD-binding FR-type domain. An FAD-binding site is contributed by 302 to 305 (YLLN). NADP(+)-binding positions include 389–390 (GQ) and 395–399 (WKGLR).

This sequence belongs to the flavoprotein pyridine nucleotide cytochrome reductase family. FAD serves as cofactor. The cofactor is FMN.

The protein resides in the membrane. Its pathway is polyketide biosynthesis. Its function is as follows. NADH-cytochrome b5 reductase-like protein; part of the gene cluster that mediates the biosynthesis of asperlin, a polyketide showing anti-inflammatory, antitumor and antibiotic activities. The first step of the asperlin biosynthesis is the production of the intermediate 2,4,6-octatrienoic acid by the highly redusing polyketide synthase alnA with cleavage of the PKS product by the esterase alnB. 2,4,6-octatrienoic acid is further converted to asperlin via several steps involving the remaining enzymes from the cluster. This chain is NADH-cytochrome b5 reductase-like protein alnC, found in Emericella nidulans (strain FGSC A4 / ATCC 38163 / CBS 112.46 / NRRL 194 / M139) (Aspergillus nidulans).